Consider the following 79-residue polypeptide: Protein FAM236A (79 aa).

The protein belongs to the FAM236 family.

The chain is Protein FAM236A from Homo sapiens (Human).